Reading from the N-terminus, the 582-residue chain is GPI-anchor transamidase component PIGT (582 aa).

Positions 1-25 (MAAAMPLGLPLRLLVLLLVGRGCCG) are cleaved as a signal peptide. At 26-529 (CAEGPRDSLR…NLPTPDFSMP (504 aa)) the chain is on the lumenal side. N168 is a glycosylation site (N-linked (GlcNAc...) asparagine). Cystine bridges form between C199–C276 and C230–C235. Residues N295 and N331 are each glycosylated (N-linked (GlcNAc...) asparagine). Positions 465, 525, 527, and 531 each coordinate a 2-acyl-6-[6-phosphoethanolamine-alpha-D-mannosyl-(1-&gt;2)-6-phosphoethanolamine-alpha-D-mannosyl-(1-&gt;6)-2-phosphoethanolamine-alpha-D-mannosyl-(1-&gt;4)-alpha-D-glucosaminyl]-1-(1-radyl,2-acyl-sn-glycero-3-phospho)-1D-myo-inositol. A helical transmembrane segment spans residues 530–552 (YNVICLTCTVVAVCYGSFYNLLT). At 553 to 582 (RTFHIEEPKSGGLAKRLANLIRRARGVPPL) the chain is on the cytoplasmic side.

It belongs to the PIGT family. As to quaternary structure, heteropentamer. Part of the GPI-anchor transamidase complex, consisting of PIGK, PIGT, PIGS, PIGU and GAA1. In terms of processing, the disulfide bond between PIGK/GPI8 and PIGT is important for normal enzyme activity.

Its subcellular location is the endoplasmic reticulum membrane. The protein operates within glycolipid biosynthesis; glycosylphosphatidylinositol-anchor biosynthesis. In terms of biological role, component of the glycosylphosphatidylinositol-anchor (GPI-anchor) transamidase (GPI-T) complex that catalyzes the formation of the linkage between a proprotein and a GPI-anchor and participates in GPI anchored protein biosynthesis. May play a crucial role in GPI-T complex assembly in the luminal layer. Binds GPI-anchor. The chain is GPI-anchor transamidase component PIGT from Mus musculus (Mouse).